The following is a 196-amino-acid chain: MNEAVSPGALSTLFTDARTHNGWRETPVSDETLRELYALMKWGPTSANCSPARIVFIRTVEGKERLRPALSSGNLQKTLTAPVTAIVAWDSEFYERLPLLFPHGDARSWFTSSPQLAEETAFRNSSMQAAYLIVACRALGLDTGPMSGFDRQYVDDAFFAGSTLKSNLLINIGYGDSSKLYARLPRLSFEEACGLL.

This sequence belongs to the nitroreductase family. HadB/RutE subfamily. FMN serves as cofactor.

It carries out the reaction 3-hydroxypropanoate + NADP(+) = 3-oxopropanoate + NADPH + H(+). Functionally, may reduce toxic product malonic semialdehyde to 3-hydroxypropionic acid, which is excreted. The chain is Probable malonic semialdehyde reductase RutE from Escherichia coli O139:H28 (strain E24377A / ETEC).